The primary structure comprises 173 residues: MNTSHIVLMICFIVGVGQTALALKEDDCEVCVKTVKRFADTLDDATKKDYKLIETAFKKYCKTQKNKEHRFCYYLGGLEESATGILNELSKPLSWSMPAEKVCEKLKKKDAQICDLRYEKQIDLNSVDLKKLKVRDLKKILNDWDESCDGCLEKSDFIKRIEELKPKYSRNEL.

An N-terminal signal peptide occupies residues 1-22 (MNTSHIVLMICFIVGVGQTALA). 4 disulfides stabilise this stretch: Cys-28–Cys-114, Cys-31–Cys-103, Cys-61–Cys-72, and Cys-148–Cys-151.

It belongs to the ARMET family.

It localises to the secreted. Its function is as follows. Required during the maturation of the embryonic nervous system for maintenance of neuronal and cuticular connectivity. Essential for maintenance of dopaminergic neurons and dopamine levels. The protein is Mesencephalic astrocyte-derived neurotrophic factor homolog of Drosophila virilis (Fruit fly).